The sequence spans 524 residues: Bifunctional purine biosynthesis protein PurH (524 aa).

Residues 1-149 (MSDPLIKRAL…KNNESVTVLT (149 aa)) form the MGS-like domain.

The protein belongs to the PurH family.

The catalysed reaction is (6R)-10-formyltetrahydrofolate + 5-amino-1-(5-phospho-beta-D-ribosyl)imidazole-4-carboxamide = 5-formamido-1-(5-phospho-D-ribosyl)imidazole-4-carboxamide + (6S)-5,6,7,8-tetrahydrofolate. The enzyme catalyses IMP + H2O = 5-formamido-1-(5-phospho-D-ribosyl)imidazole-4-carboxamide. It functions in the pathway purine metabolism; IMP biosynthesis via de novo pathway; 5-formamido-1-(5-phospho-D-ribosyl)imidazole-4-carboxamide from 5-amino-1-(5-phospho-D-ribosyl)imidazole-4-carboxamide (10-formyl THF route): step 1/1. The protein operates within purine metabolism; IMP biosynthesis via de novo pathway; IMP from 5-formamido-1-(5-phospho-D-ribosyl)imidazole-4-carboxamide: step 1/1. In Chlorobium phaeovibrioides (strain DSM 265 / 1930) (Prosthecochloris vibrioformis (strain DSM 265)), this protein is Bifunctional purine biosynthesis protein PurH.